Here is a 479-residue protein sequence, read N- to C-terminus: Glycogen synthase (479 aa).

Residue lysine 16 participates in ADP-alpha-D-glucose binding.

The protein belongs to the glycosyltransferase 1 family. Bacterial/plant glycogen synthase subfamily.

It carries out the reaction [(1-&gt;4)-alpha-D-glucosyl](n) + ADP-alpha-D-glucose = [(1-&gt;4)-alpha-D-glucosyl](n+1) + ADP + H(+). It functions in the pathway glycan biosynthesis; glycogen biosynthesis. In terms of biological role, synthesizes alpha-1,4-glucan chains using ADP-glucose. The sequence is that of Glycogen synthase from Lactiplantibacillus plantarum (strain ATCC BAA-793 / NCIMB 8826 / WCFS1) (Lactobacillus plantarum).